Consider the following 484-residue polypeptide: MTNEVRVRYAPSPTGYPHLGNIRTAMFNWLFARHNGGKFIVRIEDTDRERYVEGAVESILESLNWLGLDWDEGPDKGGDYGPYYQSERLFLYRQAAERLVTEGKAYYCHCSSERLDKMREEQIARKEPPGYDRCCRDLCLGQKEGAVIRFKIPLEGQTTFIDLIRGEVTFDNAKQDDFVILKSDGFPTYHLASVVDDHAMQISHVLRAEEWLPSTPKHLMLYKALGYTPPQYAHLPMILGPDRSKLSKRHGATSTIEYKQAGYLPETMVNFLSLLGWAYDDKTELFSRKQLIEYFCLEKVSKTAAIFNYEKLDWMNGMYIRTLSAPDLASRAIPFLEKDERIAASGRLNFDYTTKVMPLIQERVKKLSELAELCWFIYSDNISYDPASLIDKKLTKDESLCALKAAFARLEALANFDAVSMEEHIRPLAAELELKPGQLFGMLRTASTGQQVAPPLFQTMEVLGRERCLGRIAMAIARLSELPS.

The short motif at 11 to 21 is the 'HIGH' region element; sequence PSPTGYPHLGN. Cys108, Cys110, Cys135, and Asp137 together coordinate Zn(2+). The 'KMSKS' region signature appears at 245 to 249; sequence KLSKR. An ATP-binding site is contributed by Lys248.

Belongs to the class-I aminoacyl-tRNA synthetase family. Glutamate--tRNA ligase type 1 subfamily. Monomer. Zn(2+) serves as cofactor.

The protein resides in the cytoplasm. It carries out the reaction tRNA(Glu) + L-glutamate + ATP = L-glutamyl-tRNA(Glu) + AMP + diphosphate. In terms of biological role, catalyzes the attachment of glutamate to tRNA(Glu) in a two-step reaction: glutamate is first activated by ATP to form Glu-AMP and then transferred to the acceptor end of tRNA(Glu). The protein is Glutamate--tRNA ligase of Dehalococcoides mccartyi (strain ATCC BAA-2266 / KCTC 15142 / 195) (Dehalococcoides ethenogenes (strain 195)).